A 1087-amino-acid polypeptide reads, in one-letter code: Apoptosis-stimulating of p53 protein 1 (1087 aa).

Positions 82–122 (HEDSPTESSEQGARQTQEQRTQRSVVNVPGEKRTENGVGNP) are disordered. The span at 87-106 (TESSEQGARQTQEQRTQRSV) shows a compositional bias: polar residues. 2 positions are modified to phosphoserine: S332 and S335. 3 disordered regions span residues 374 to 415 (SSAA…GMEG), 442 to 721 (IGKG…PNIQ), and 734 to 878 (GMEG…TGHG). Positions 393–405 (KQNSASVKSTQMT) are enriched in polar residues. Pro residues predominate over residues 445–458 (GPPPIPGVGKPLPP). Low complexity predominate over residues 459-476 (SYGTYPSSGPLGPGSTSS). Residues 506 to 520 (NAPQPGSSQQIQQRI) are compositionally biased toward polar residues. A compositionally biased stretch (pro residues) spans 523-536 (PPSPTYPPAGPPAF). At R552 the chain carries Asymmetric dimethylarginine. The span at 570 to 589 (QTVNSSSIYSMYLQQATPPK) shows a compositional bias: polar residues. Low complexity predominate over residues 610–625 (PVLPSGSASPSPLPFL). A phosphoserine mark is found at S679 and S708. A compositionally biased stretch (polar residues) spans 805–831 (PQTTHQTAEPTEDNNNNVAPVPSTEQI). 2 ANK repeats span residues 917–949 (EGIT…AADS) and 950–982 (DGWT…ASTI). Residues 1016 to 1078 (MNKGTVYALW…PKNLLGLYPR (63 aa)) form the SH3 domain.

It belongs to the ASPP family. In terms of assembly, interacts with P53/TP53; the interaction promotes pro-apoptotic activity.

The protein localises to the cytoplasm. Its subcellular location is the nucleus. Regulator that plays a central role in regulation of apoptosis via its interaction with p53/TP53. Regulates TP53 by enhancing the DNA binding and transactivation function of TP53 on the promoters of proapoptotic genes in vivo. The sequence is that of Apoptosis-stimulating of p53 protein 1 (Ppp1r13b) from Mus musculus (Mouse).